Reading from the N-terminus, the 235-residue chain is Protein shisa-5 (235 aa).

A signal peptide spans Met-1–Gly-26. At Glu-27–Gly-105 the chain is on the extracellular side. A helical membrane pass occupies residues Phe-106 to Ile-126. Over Cys-127–Pro-235 the chain is Cytoplasmic. A disordered region spans residues Ala-157–Pro-235. Pro residues-rich tracts occupy residues Tyr-159–Pro-172 and Pro-181–Tyr-211.

This sequence belongs to the shisa family. Interacts with PDCD6; PDCD6 can stabilize SHISA5. In terms of tissue distribution, spleen and thymus.

It localises to the endoplasmic reticulum membrane. It is found in the nucleus membrane. Can induce apoptosis in a caspase-dependent manner and plays a role in p53/TP53-dependent apoptosis. The polypeptide is Protein shisa-5 (Shisa5) (Mus musculus (Mouse)).